Reading from the N-terminus, the 241-residue chain is Homeobox protein TGIF2LX (241 aa).

2 disordered regions span residues 1-58 and 126-210; these read MEAA…GNLP and TGKD…SPEE. The segment covering 21–39 has biased composition (polar residues); it reads AKTQSPAQDTSIMSRNNAD. A DNA-binding region (homeobox; TALE-type) is located at residues 48-111; it reads EHKKKRKGNL…INARRRILPD (64 aa). Residues 195–206 are compositionally biased toward low complexity; the sequence is VSVTSPSSPELV.

The protein belongs to the TALE/TGIF homeobox family. As to expression, specifically expressed in adult testis.

The protein resides in the nucleus. In terms of biological role, may have a transcription role in testis. The polypeptide is Homeobox protein TGIF2LX (TGIF2LX) (Homo sapiens (Human)).